The sequence spans 414 residues: 3-aminobutyryl-CoA aminotransferase (414 aa).

At K261 the chain carries N6-(pyridoxal phosphate)lysine.

Belongs to the class-III pyridoxal-phosphate-dependent aminotransferase family. As to quaternary structure, homodimer. It depends on pyridoxal 5'-phosphate as a cofactor.

It carries out the reaction (3S)-3-aminobutanoyl-CoA + 2-oxoglutarate = acetoacetyl-CoA + L-glutamate. The protein operates within amino-acid degradation; L-lysine degradation via acetate pathway. Its function is as follows. 3-aminobutyryl-CoA aminotransferase that acts specifically on coenzyme A (CoA) esters and catalyzes the conversion of 3-aminobutyryl-CoA into acetoacetyl-CoA in an alternative pathway of lysine fermentation. This Cloacimonas acidaminovorans (strain Evry) protein is 3-aminobutyryl-CoA aminotransferase (kat).